Consider the following 395-residue polypeptide: MQSPAVLRTSRQVQNAHTGLDLSVPQHQEVRGKMMSGHVEYQILVVTRLAVFKSAKHRPEDVVQFLVSKKYSEIEEFYQKLYSCYPAASLPPLPRKVLFVGESDIRERRAMFDEILRCVSKDAQLAGSPELLEFLGTRAPGATGLATRDPSVLDDTASQPGDSDEAFDFFEQQDEVQPPTLGLSSKDVEKSLVGEEEEEEEEEEVLDPLGIMRSKKPKKRPEVAVRPKPAPRLTIFDEEVDPDAGLFSSDKKVSETRRPLETTQDSLKLFDDPDLGGAVSLGDPLLLPAASESRGPTSRPEHGDASKELFRVEEDLDLILNLGSEPKPKPQTKPKPLVPAKPALPRKPTLPASVGPSEPGSGPQKQQQIQAMDEMDILQYIRDHDTLAQDSPSLF.

Met1 carries the N-acetylmethionine modification. Phosphoserine is present on Ser3. Residues 19–142 (GLDLSVPQHQ…EFLGTRAPGA (124 aa)) enclose the PX domain. Disordered stretches follow at residues 143 to 310 (TGLA…KELF) and 322 to 374 (LGSE…AMDE). Residues 162 to 174 (DSDEAFDFFEQQD) show a composition bias toward acidic residues. Ser191 is subject to Phosphoserine. The segment covering 194–206 (GEEEEEEEEEEVL) has biased composition (acidic residues). Composition is skewed to basic and acidic residues over residues 249–260 (SDKKVSETRRPL) and 299–310 (RPEHGDASKELF). The residue at position 254 (Ser254) is a Phosphoserine. The span at 329 to 339 (KPQTKPKPLVP) shows a compositional bias: pro residues. Lys341 is subject to N6-acetyllysine.

Binds HCLS1. Interacts with the SH3 domain of HCLS1 in vitro. In terms of tissue distribution, ubiquitously expressed.

Functionally, may be a modulator of IL-2 signaling. This Mus musculus (Mouse) protein is HCLS1-binding protein 3 (Hs1bp3).